The primary structure comprises 499 residues: Bifunctional purine biosynthesis protein PurH (499 aa).

Positions 1 to 144 (MIKRALISVF…KNFKDVVVLT (144 aa)) constitute an MGS-like domain.

This sequence belongs to the PurH family.

It carries out the reaction (6R)-10-formyltetrahydrofolate + 5-amino-1-(5-phospho-beta-D-ribosyl)imidazole-4-carboxamide = 5-formamido-1-(5-phospho-D-ribosyl)imidazole-4-carboxamide + (6S)-5,6,7,8-tetrahydrofolate. It catalyses the reaction IMP + H2O = 5-formamido-1-(5-phospho-D-ribosyl)imidazole-4-carboxamide. It participates in purine metabolism; IMP biosynthesis via de novo pathway; 5-formamido-1-(5-phospho-D-ribosyl)imidazole-4-carboxamide from 5-amino-1-(5-phospho-D-ribosyl)imidazole-4-carboxamide (10-formyl THF route): step 1/1. The protein operates within purine metabolism; IMP biosynthesis via de novo pathway; IMP from 5-formamido-1-(5-phospho-D-ribosyl)imidazole-4-carboxamide: step 1/1. This chain is Bifunctional purine biosynthesis protein PurH, found in Clostridium botulinum (strain Kyoto / Type A2).